Reading from the N-terminus, the 100-residue chain is Large ribosomal subunit protein bL28 (100 aa).

A disordered region spans residues 1 to 21 (MSRVCDITGQGKSFGNKVSHS). A compositionally biased stretch (polar residues) spans 10–19 (QGKSFGNKVS).

It belongs to the bacterial ribosomal protein bL28 family.

The protein is Large ribosomal subunit protein bL28 of Ehrlichia canis (strain Jake).